Reading from the N-terminus, the 108-residue chain is Peptidyl-prolyl cis-trans isomerase FKBP1A (108 aa).

The region spanning 20–108 (GQTCVVHYTG…VFDVELLKLE (89 aa)) is the PPIase FKBP-type domain. The residue at position 53 (Lys53) is an N6-acetyllysine; alternate. An N6-succinyllysine; alternate modification is found at Lys53.

Belongs to the FKBP-type PPIase family. FKBP1 subfamily. In terms of assembly, interacts with TGFBR1; prevents TGFBR1 phosphorylation by TGFBR2 and stabilizes it in the inactive conformation. Interacts with ACVR1B and SMAD7. Identified in a complex composed of RYR1, PDE4D, PKA, FKBP1A and protein phosphatase 1 (PP1). Interacts directly with RYR2 and RYR3. Interacts directly with RYR1. Interacts with GLMN; rapamycin and FK506 abolish the interaction with GLMN in a dose dependent manner.

The protein localises to the cytoplasm. It localises to the cytosol. It is found in the sarcoplasmic reticulum membrane. The catalysed reaction is [protein]-peptidylproline (omega=180) = [protein]-peptidylproline (omega=0). With respect to regulation, inhibited by both FK506 and rapamycin. Its function is as follows. Keeps in an inactive conformation TGFBR1, the TGF-beta type I serine/threonine kinase receptor, preventing TGF-beta receptor activation in absence of ligand. Recruits SMAD7 to ACVR1B which prevents the association of SMAD2 and SMAD3 with the activin receptor complex, thereby blocking the activin signal. May modulate the RYR1 calcium channel activity. PPIases accelerate the folding of proteins. It catalyzes the cis-trans isomerization of proline imidic peptide bonds in oligopeptides. The polypeptide is Peptidyl-prolyl cis-trans isomerase FKBP1A (Fkbp1a) (Mus musculus (Mouse)).